Consider the following 284-residue polypeptide: Nucleotide-binding protein SO_3964 (284 aa).

8-15 (GRSGSGKS) is an ATP binding site. A GTP-binding site is contributed by 56–59 (DVRN).

The protein belongs to the RapZ-like family.

In terms of biological role, displays ATPase and GTPase activities. The protein is Nucleotide-binding protein SO_3964 of Shewanella oneidensis (strain ATCC 700550 / JCM 31522 / CIP 106686 / LMG 19005 / NCIMB 14063 / MR-1).